The chain runs to 349 residues: 4-hydroxythreonine-4-phosphate dehydrogenase (349 aa).

The substrate site is built by His141 and Thr142. Residues His176, His221, and His276 each contribute to the a divalent metal cation site. Substrate is bound by residues Lys284, Asn293, and Arg302.

It belongs to the PdxA family. As to quaternary structure, homodimer. It depends on Zn(2+) as a cofactor. Mg(2+) is required as a cofactor. Co(2+) serves as cofactor.

Its subcellular location is the cytoplasm. It catalyses the reaction 4-(phosphooxy)-L-threonine + NAD(+) = 3-amino-2-oxopropyl phosphate + CO2 + NADH. Its pathway is cofactor biosynthesis; pyridoxine 5'-phosphate biosynthesis; pyridoxine 5'-phosphate from D-erythrose 4-phosphate: step 4/5. Functionally, catalyzes the NAD(P)-dependent oxidation of 4-(phosphooxy)-L-threonine (HTP) into 2-amino-3-oxo-4-(phosphooxy)butyric acid which spontaneously decarboxylates to form 3-amino-2-oxopropyl phosphate (AHAP). The polypeptide is 4-hydroxythreonine-4-phosphate dehydrogenase (Methylorubrum extorquens (strain PA1) (Methylobacterium extorquens)).